A 275-amino-acid chain; its full sequence is NH(3)-dependent NAD(+) synthetase (275 aa).

46-53 is an ATP binding site; sequence GISGGQDS. A Mg(2+)-binding site is contributed by Asp-52. A deamido-NAD(+)-binding site is contributed by Arg-140. Position 160 (Thr-160) interacts with ATP. Residue Glu-165 coordinates Mg(2+). Deamido-NAD(+) contacts are provided by Lys-173 and Asp-180. Residues Lys-189 and Thr-211 each contribute to the ATP site. Deamido-NAD(+) is bound at residue 260–261; sequence HK.

Belongs to the NAD synthetase family. In terms of assembly, homodimer.

The enzyme catalyses deamido-NAD(+) + NH4(+) + ATP = AMP + diphosphate + NAD(+) + H(+). It participates in cofactor biosynthesis; NAD(+) biosynthesis; NAD(+) from deamido-NAD(+) (ammonia route): step 1/1. Catalyzes the ATP-dependent amidation of deamido-NAD to form NAD. Uses ammonia as a nitrogen source. In Escherichia coli O7:K1 (strain IAI39 / ExPEC), this protein is NH(3)-dependent NAD(+) synthetase.